The primary structure comprises 617 residues: Autophagy-related protein 20 (617 aa).

The tract at residues 1–83 (MWNDEDNNPY…KRKPGGYDSR (83 aa)) is disordered. Residues 20–31 (QSSSINPTSPST) are compositionally biased toward low complexity. A compositionally biased stretch (basic and acidic residues) spans 48–58 (DNEHNHGVIHD). Positions 59–68 (DSDDDDEDLT) are enriched in acidic residues. Residues 89–209 (YENPKLSILI…RFFDPNASWS (121 aa)) form the PX domain. Residues arginine 126, serine 128, lysine 152, and arginine 175 each contribute to the a 1,2-diacyl-sn-glycero-3-phospho-(1D-myo-inositol-3-phosphate) site. A coiled-coil region spans residues 403 to 440 (QQDLTTEELSKKRALLDQLEQSEAEARRIENYLSSSQQ). Residues 434-516 (YLSSSQQISP…SGNSITNKIF (83 aa)) form a disordered region. Over residues 454–463 (PPSHQRRDGS) the composition is skewed to basic and acidic residues. A compositionally biased stretch (polar residues) spans 480–500 (DFSSHTPSASQGLPERSTSVP).

This sequence belongs to the sorting nexin family. Forms a complex with SNX4/ATG24 and ATG17.

The protein resides in the endosome membrane. The protein localises to the preautophagosomal structure membrane. In terms of biological role, required for cytoplasm to vacuole transport (Cvt), pexophagy and mitophagy. Also involved in endoplasmic reticulum-specific autophagic process and is essential for the survival of cells subjected to severe ER stress. Functions in protein retrieval from the endocytic pathway. Required for proper sorting of the v-SNARE protein SNC1. Autophagy is required for proper vegetative growth, asexual/sexual reproduction, and full virulence. Autophagy is particularly involved in the biosynthesis of deoxynivalenol (DON), an important virulence determinant. The polypeptide is Autophagy-related protein 20 (Gibberella zeae (strain ATCC MYA-4620 / CBS 123657 / FGSC 9075 / NRRL 31084 / PH-1) (Wheat head blight fungus)).